Consider the following 683-residue polypeptide: U4/U6 small nuclear ribonucleoprotein Prp3 (683 aa).

One can recognise a PWI domain in the interval 1 to 87 (MALSKRELDE…HSKSSSDRSR (87 aa)). The span at 73 to 107 (GRSSRHSKSSSDRSRKRELKEVFGDDSEISKESSG) shows a compositional bias: basic and acidic residues. The tract at residues 73-135 (GRSSRHSKSS…IPGPPSESPG (63 aa)) is disordered. Lys-139 is covalently cross-linked (Glycyl lysine isopeptide (Lys-Gly) (interchain with G-Cter in SUMO2)). Residues 153 to 183 (IEERKKQLSFISPPTPQPKTPSSSQPERLPI) are disordered. Ser-164 is modified (phosphoserine). Thr-167 carries the post-translational modification Phosphothreonine. Glycyl lysine isopeptide (Lys-Gly) (interchain with G-Cter in SUMO2) cross-links involve residues Lys-244 and Lys-252. The segment at 416–550 (NLVEHPAQLN…VHISVYRVRN (135 aa)) is mediates interaction with SART3. Ser-619 carries the phosphoserine modification.

In terms of assembly, component of the precatalytic spliceosome (spliceosome B complex). Component of the U4/U6-U5 tri-snRNP complex, a building block of the precatalytic spliceosome (spliceosome B complex). The U4/U6-U5 tri-snRNP complex is composed of the U4, U6 and U5 snRNAs and at least PRPF3, PRPF4, PRPF6, PRPF8, PRPF31, SNRNP200, TXNL4A, SNRNP40, SNRPB, SNRPD1, SNRPD2, SNRPD3, SNRPE, SNRPF, SNRPG, DDX23, CD2BP2, PPIH, SNU13, EFTUD2, SART1 and USP39, plus LSM2, LSM3, LSM4, LSM5, LSM6, LSM7 and LSM8. Interacts directly with PRPF4. Part of a heteromeric complex containing PPIH, PRPF3 and PRPF4 that is stable in the absence of RNA. Interacts with SART3; the interaction is direct and recruits the deubiquitinase USP4 to PRPF3. Interacts with PRPF19. Interacts ('Lys-63'-linked polyubiquitinated) with PRPF8 (via the MPN (JAB/Mov34) domain); may stabilize the U4/U6-U5 tri-snRNP complex. Interacts with ERCC6. Post-translationally, ubiquitinated. Undergoes 'Lys-63'-linked polyubiquitination by PRPF19 and deubiquitination by USP4. 'Lys-63'-linked ubiquitination increases the affinity for PRPF8 and may regulate the assembly of the U4/U6-U5 tri-snRNP complex.

It is found in the nucleus. It localises to the nucleus speckle. Functionally, plays a role in pre-mRNA splicing as component of the U4/U6-U5 tri-snRNP complex that is involved in spliceosome assembly, and as component of the precatalytic spliceosome (spliceosome B complex). The sequence is that of U4/U6 small nuclear ribonucleoprotein Prp3 (PRPF3) from Pongo abelii (Sumatran orangutan).